The primary structure comprises 376 residues: Polycomb group protein FIE1 (376 aa).

WD repeat units lie at residues 85 to 127 (DKDE…LLKT), 130 to 170 (GHGD…CILI), 176 to 216 (GHRN…PYVE), 242 to 279 (VHSN…QSPG), 291 to 332 (VPEC…PVLT), and 339 to 376 (QCKS…HPKA).

Belongs to the WD repeat ESC family. As to quaternary structure, interacts with EZ1. Component of the polycomb repressive complex 2 (PRC2), composed of the core PRC2 components EMF2B, EZ1 and CLF. PRC2 methylates 'Lys-27' residues of histone H3 (H3K27me3), leading to transcriptional repression of the affected target gene. In terms of tissue distribution, widely expressed.

In terms of biological role, polycomb group (PcG) protein. PcG proteins act by forming multiprotein complexes, which are required to maintain the transcriptionally repressive state of homeotic genes throughout development. PcG proteins are not required to initiate repression, but to maintain it during later stages of development. They act via the methylation of histones, rendering chromatin heritably changed in its expressibility. Involved in the regulation of seed endosperm development, grain filling and seed dormancy. FIE2-containing PcG complex in seed endosperm regulates the expression of various transcription factors by trimethylation on histone H3 'Lys-27' (H3K27me3) of target genes. Involved in the overall expression regulation of a large number of nutrient metabolism genes. Involved in the regulation of seed endosperm development. Involved in the regulation of vegetative development, particularly in stem cell maintenance in the root system, where it maintains the suppression of key differentiation regulators. This Oryza sativa subsp. japonica (Rice) protein is Polycomb group protein FIE1.